Consider the following 826-residue polypeptide: Ubiquitin carboxyl-terminal hydrolase 16 (826 aa).

The segment at 1–23 (MGKKRTKGKSVPEKASSESTEPM) is disordered. The UBP-type zinc finger occupies 22-141 (PMCRHLRKGL…QVVDYVRKQA (120 aa)). Positions 24, 26, 48, 51, 73, 76, 81, 89, 93, 102, 115, and 118 each coordinate Zn(2+). K139 is covalently cross-linked (Glycyl lysine isopeptide (Lys-Gly) (interchain with G-Cter in SUMO2)). The tract at residues 145–184 (TSKPAEKNNGHIELENKKLEKESKNEQEREKSESMAKENI) is disordered. Residues 148–180 (PAEKNNGHIELENKKLEKESKNEQEREKSESMA) are compositionally biased toward basic and acidic residues. Residue S188 is modified to Phosphoserine. A USP domain is found at 195–825 (KGLSNLGNTC…QAYLLFYERI (631 aa)). Catalysis depends on C204, which acts as the Nucleophile. Basic and acidic residues predominate over residues 392-407 (QSGKKNINDKNVKKTM). 2 disordered regions span residues 392 to 456 (QSGK…RRQQ) and 526 to 553 (ADER…TSAP). Positions 408–419 (EEEDKDSEEEKD) are enriched in acidic residues. Phosphoserine is present on S414. Positions 436–456 (HTQKKAKKQAKKQAKNQRRQQ) are enriched in basic residues. The segment covering 526 to 537 (ADERKCPEHPEV) has biased composition (basic and acidic residues). The segment covering 539-551 (SVSTESDLGSLTS) has biased composition (polar residues). The Proton acceptor role is filled by H760.

This sequence belongs to the peptidase C19 family. USP16 subfamily. As to quaternary structure, homotetramer. Associates with late pre-40S ribosomes. Interacts with CEP78; promoting deubiquitination of tektins. In terms of processing, phosphorylated at the onset of mitosis and dephosphorylated during the metaphase/anaphase transition. Phosphorylation by AURKB enhances the deubiquitinase activity.

Its subcellular location is the nucleus. The catalysed reaction is Thiol-dependent hydrolysis of ester, thioester, amide, peptide and isopeptide bonds formed by the C-terminal Gly of ubiquitin (a 76-residue protein attached to proteins as an intracellular targeting signal).. In terms of biological role, specifically deubiquitinates 'Lys-120' of histone H2A (H2AK119Ub), a specific tag for epigenetic transcriptional repression, thereby acting as a coactivator. Deubiquitination of histone H2A is a prerequisite for subsequent phosphorylation at 'Ser-11' of histone H3 (H3S10ph), and is required for chromosome segregation when cells enter into mitosis. In resting B- and T-lymphocytes, phosphorylation by AURKB leads to enhance its activity, thereby maintaining transcription in resting lymphocytes. Regulates Hox gene expression via histone H2A deubiquitination. Prefers nucleosomal substrates. Does not deubiquitinate histone H2B. Also deubiquitinates non-histone proteins, such as ribosomal protein RPS27A: deubiquitination of monoubiquitinated RPS27A promotes maturation of the 40S ribosomal subunit. Also mediates deubiquitination of tektin proteins (TEKT1, TEKT2, TEK3, TEKT4 and TEKT5), promoting their stability. The chain is Ubiquitin carboxyl-terminal hydrolase 16 (Usp16) from Rattus norvegicus (Rat).